A 359-amino-acid polypeptide reads, in one-letter code: Phospho-N-acetylmuramoyl-pentapeptide-transferase (359 aa).

At 1–25 the chain is on the periplasmic side; that stretch reads MLYQLALLLKDYWFAFNVLKYITFR. A helical membrane pass occupies residues 26 to 48; it reads SFTAVLIAFFLTLVLSPSFINRL. Residues 49-74 are Cytoplasmic-facing; it reads RKIQRLFGGYVREYTPESHEVKKYTP. Residues Lys-70 and Thr-75 each contribute to the muraymycin D2 site. Residues 75 to 92 form a helical membrane-spanning segment; it reads TMGGIVILIVVTLSTLLL. Residues 93–98 are Periplasmic-facing; the sequence is MRWDIK. A helical membrane pass occupies residues 99-120; it reads YTWVVLLSFLSFGTIGFWDDYV. The Cytoplasmic portion of the chain corresponds to 121–130; the sequence is KLKNKKGISI. Residues 131–152 form a helical membrane-spanning segment; the sequence is KTKFLLQVLSASLISVLIYYWA. The Periplasmic segment spans residues 153–172; that stretch reads DIDTILYFPFFKELYVDLGV. Residues 173–194 form a helical membrane-spanning segment; the sequence is LYLPFAVFVIVGSANAVNLTDG. Muraymycin D2 is bound by residues Asn-190, Asp-193, and Asp-196. Topologically, residues 195-197 are cytoplasmic; that stretch reads LDG. The helical transmembrane segment at 198 to 218 threads the bilayer; the sequence is LAIGPAMTTATALGVVAYAVG. Topologically, residues 219–233 are periplasmic; it reads HSKIAQYLNIPYVPY. A helical transmembrane segment spans residues 234 to 255; sequence AGELTVFCFALVGAGLGFLWFN. At 256 to 264 the chain is on the cytoplasmic side; that stretch reads SFPAQMFMG. The muraymycin D2 site is built by Gly-264 and Ser-268. Residues 265 to 280 form a helical membrane-spanning segment; it reads DVGSLSIGASLATVAL. Topologically, residues 281-284 are periplasmic; sequence LTKS. A helical transmembrane segment spans residues 285 to 310; the sequence is EFIFAVAAGVFVFETISVILQIIYFR. The muraymycin D2 site is built by Gln-305 and Ala-321. The Cytoplasmic segment spans residues 311 to 332; the sequence is WTGGKRLFKRAPFHHHLELNGL. Residues 333–355 traverse the membrane as a helical segment; that stretch reads PEPKIVVRMWIISILLAIIAISM. Over 356–359 the chain is Periplasmic; it reads LKLR.

It belongs to the glycosyltransferase 4 family. MraY subfamily. Homodimer. It depends on Mg(2+) as a cofactor. Mn(2+) is required as a cofactor.

It localises to the cell inner membrane. It carries out the reaction UDP-N-acetyl-alpha-D-muramoyl-L-alanyl-gamma-D-glutamyl-meso-2,6-diaminopimeloyl-D-alanyl-D-alanine + di-trans,octa-cis-undecaprenyl phosphate = di-trans,octa-cis-undecaprenyl diphospho-N-acetyl-alpha-D-muramoyl-L-alanyl-D-glutamyl-meso-2,6-diaminopimeloyl-D-alanyl-D-alanine + UMP. Its pathway is cell wall biogenesis; peptidoglycan biosynthesis. With respect to regulation, inhibited by natural nucleoside antibiotics including tunicamycin, capuramycin and muraymycin. Usually the cofactor magnesium is not required for antibiotic binding. In terms of biological role, catalyzes the initial step of the lipid cycle reactions in the biosynthesis of the cell wall peptidoglycan: transfers peptidoglycan precursor phospho-MurNAc-pentapeptide from UDP-MurNAc-pentapeptide onto the lipid carrier undecaprenyl phosphate, yielding undecaprenyl-pyrophosphoryl-MurNAc-pentapeptide, known as lipid I. The polypeptide is Phospho-N-acetylmuramoyl-pentapeptide-transferase (Aquifex aeolicus (strain VF5)).